A 401-amino-acid polypeptide reads, in one-letter code: Adenylosuccinate synthetase (401 aa).

GTP contacts are provided by residues 12–18 (GDEGKGK) and 40–42 (GHT). D13 serves as the catalytic Proton acceptor. 2 residues coordinate Mg(2+): D13 and G40. Residues 13–16 (DEGK), 38–41 (NAGH), T128, R142, Q212, T227, and R290 each bind IMP. Catalysis depends on H41, which acts as the Proton donor. 286–292 (ATTRRPR) is a binding site for substrate. GTP is bound by residues R292, 318–320 (KAD), and 390–392 (STG).

Belongs to the adenylosuccinate synthetase family. In terms of assembly, homodimer. Requires Mg(2+) as cofactor.

The protein localises to the cytoplasm. The enzyme catalyses IMP + L-aspartate + GTP = N(6)-(1,2-dicarboxyethyl)-AMP + GDP + phosphate + 2 H(+). Its pathway is purine metabolism; AMP biosynthesis via de novo pathway; AMP from IMP: step 1/2. Plays an important role in the de novo pathway of purine nucleotide biosynthesis. Catalyzes the first committed step in the biosynthesis of AMP from IMP. The sequence is that of Adenylosuccinate synthetase from Pseudothermotoga lettingae (strain ATCC BAA-301 / DSM 14385 / NBRC 107922 / TMO) (Thermotoga lettingae).